The following is a 116-amino-acid chain: DNA polymerase epsilon subunit 4 (116 aa).

The span at 1 to 10 shows a compositional bias: low complexity; the sequence is MAAAAPGSGA. The disordered stretch occupies residues 1 to 36; sequence MAAAAPGSGAAREEEGTGGDAATPQPPAPTSAPGAR.

As to quaternary structure, component of the DNA polymerase epsilon complex consisting of four subunits: the catalytic subunit POLE and the accessory subunits POLE2, POLE3 and POLE4. Interaction with POLE3 is a prerequisite for further binding with POLE and POLE2.

The protein localises to the nucleus. Its function is as follows. Accessory component of the DNA polymerase epsilon complex. Participates in DNA repair and in chromosomal DNA replication. The polypeptide is DNA polymerase epsilon subunit 4 (POLE4) (Bos taurus (Bovine)).